A 102-amino-acid chain; its full sequence is Citrate lyase acyl carrier protein (102 aa).

Ser-14 carries the post-translational modification O-(phosphoribosyl dephospho-coenzyme A)serine.

It belongs to the CitD family. In terms of assembly, oligomer with a subunit composition of (alpha,beta,gamma)6.

It localises to the cytoplasm. In terms of biological role, covalent carrier of the coenzyme of citrate lyase. This is Citrate lyase acyl carrier protein from Streptococcus pyogenes serotype M18 (strain MGAS8232).